The sequence spans 502 residues: MFGDRQRPMVLVLGLGESGLAIARWCARHGCRLRIADTREAPPNLAALQAEGIDAEFVGGPFTPSLLDGGVEIVGLSPGLSPLEPALAALIAAANERAIAVWGELEFFAQALRALGTSGYQPKVLAITGTNGKTTTTNLTGLLCQRSGKKVAVAGNISPAMLDRLARAIDETALPDVWVLELSSFQLETARTFAPDAAAILNITQDHLDWHGSFDAYAAAKGRVFGATTTRVLNRDDAAVMKFAPAAGAADAARTVTFGLNEPAQQGDYGLSRDNGIAWLVEAVDRDAPDETTSRRRKRDGVHTPDIAQKRLMPADALRIRGLHNAANALAAFALARAIDLPAAPLLHALREYRGEAHRVEVIATIDDVDYVDDSKGTNVGATVAALDGLAQKIVLIAGGDGKGQDFAPLVAPVARWCRAVMLIGRDAPAIRDTLAETGVPLADHATLEAAVHAAAELAEPGDAVLLSPACASLDMFRNYAHRADVFRAAVDEIAIDKGATT.

ATP is bound at residue Gly-129–Thr-135.

The protein belongs to the MurCDEF family.

It is found in the cytoplasm. It catalyses the reaction UDP-N-acetyl-alpha-D-muramoyl-L-alanine + D-glutamate + ATP = UDP-N-acetyl-alpha-D-muramoyl-L-alanyl-D-glutamate + ADP + phosphate + H(+). It functions in the pathway cell wall biogenesis; peptidoglycan biosynthesis. Cell wall formation. Catalyzes the addition of glutamate to the nucleotide precursor UDP-N-acetylmuramoyl-L-alanine (UMA). This chain is UDP-N-acetylmuramoylalanine--D-glutamate ligase, found in Burkholderia ambifaria (strain MC40-6).